The chain runs to 432 residues: D-amino acid dehydrogenase (432 aa).

3 to 17 (VLVLGSGVIGTTTAY) is a binding site for FAD.

This sequence belongs to the DadA oxidoreductase family. The cofactor is FAD.

The enzyme catalyses a D-alpha-amino acid + A + H2O = a 2-oxocarboxylate + AH2 + NH4(+). It participates in amino-acid degradation; D-alanine degradation; NH(3) and pyruvate from D-alanine: step 1/1. Functionally, oxidative deamination of D-amino acids. The polypeptide is D-amino acid dehydrogenase (Azotobacter vinelandii (strain DJ / ATCC BAA-1303)).